The sequence spans 227 residues: Threonine--tRNA ligase (227 aa).

The interval Asp1 to Pro120 is catalytic.

Belongs to the class-II aminoacyl-tRNA synthetase family. As to quaternary structure, homodimer.

Its subcellular location is the cytoplasm. The enzyme catalyses tRNA(Thr) + L-threonine + ATP = L-threonyl-tRNA(Thr) + AMP + diphosphate + H(+). Functionally, catalyzes the attachment of threonine to tRNA(Thr) in a two-step reaction: L-threonine is first activated by ATP to form Thr-AMP and then transferred to the acceptor end of tRNA(Thr). Also edits incorrectly charged L-seryl-tRNA(Thr). The sequence is that of Threonine--tRNA ligase from Pseudomonas syringae pv. syringae.